A 347-amino-acid polypeptide reads, in one-letter code: Extracellular exo-alpha-(1-&gt;5)-L-arabinofuranosidase ArbA (347 aa).

Positions 1-31 are cleaved as a signal peptide; that stretch reads MPTHHPITRQHWHHSWLSALALLCASLACGA. Asp-35 lines the substrate pocket. Asp-38 (proton acceptor) is an active-site residue. Substrate-binding positions include 90–92, 115–116, Asn-155, Ser-175, and Glu-221; these read DGH and GK. The Proton donor role is filled by Glu-221. Position 291 (His-291) interacts with Ca(2+). A substrate-binding site is contributed by Gln-316.

This sequence belongs to the glycosyl hydrolase 43 family. Homodimer.

Its subcellular location is the secreted. The catalysed reaction is Hydrolysis of terminal non-reducing alpha-L-arabinofuranoside residues in alpha-L-arabinosides.. It functions in the pathway glycan metabolism; L-arabinan degradation. Functionally, involved in the degradation of arabinan and is a key enzyme in the complete degradation of the plant cell wall. Catalyzes the cleavage of the terminal alpha-(1-&gt;5)-arabinofuranosyl bonds of linear arabinan and carboxymethylarabinan to produce almost exclusively arabinotriose. The polypeptide is Extracellular exo-alpha-(1-&gt;5)-L-arabinofuranosidase ArbA (arbA) (Cellvibrio japonicus (strain Ueda107) (Pseudomonas fluorescens subsp. cellulosa)).